The sequence spans 53 residues: Sec-independent protein translocase protein TatA (53 aa).

The chain crosses the membrane as a helical span at residues 1-21 (MGMSFSHLLIVLLIIFVLFGA).

This sequence belongs to the TatA/E family. In terms of assembly, the Tat system comprises two distinct complexes: a TatABC complex, containing multiple copies of TatA, TatB and TatC subunits, and a separate TatA complex, containing only TatA subunits. Substrates initially bind to the TatABC complex, which probably triggers association of the separate TatA complex to form the active translocon.

It localises to the cell inner membrane. Part of the twin-arginine translocation (Tat) system that transports large folded proteins containing a characteristic twin-arginine motif in their signal peptide across membranes. TatA could form the protein-conducting channel of the Tat system. The chain is Sec-independent protein translocase protein TatA from Rickettsia rickettsii (strain Iowa).